Reading from the N-terminus, the 458-residue chain is Phosphoglucosamine mutase (458 aa).

S108 functions as the Phosphoserine intermediate in the catalytic mechanism. Mg(2+) is bound by residues S108, D247, D249, and D251. The residue at position 108 (S108) is a Phosphoserine.

This sequence belongs to the phosphohexose mutase family. It depends on Mg(2+) as a cofactor. In terms of processing, activated by phosphorylation.

It catalyses the reaction alpha-D-glucosamine 1-phosphate = D-glucosamine 6-phosphate. Its function is as follows. Catalyzes the conversion of glucosamine-6-phosphate to glucosamine-1-phosphate. This chain is Phosphoglucosamine mutase, found in Nitrosomonas europaea (strain ATCC 19718 / CIP 103999 / KCTC 2705 / NBRC 14298).